We begin with the raw amino-acid sequence, 742 residues long: Dynein axonemal intermediate chain 4 (742 aa).

4 WD repeats span residues 462 to 502, 511 to 559, 631 to 671, and 674 to 713; these read HCEC…DFPV, KHTS…DCND, GHKG…PILT, and NTTN…IDPV.

As to quaternary structure, part of the multisubunit axonemal dynein complex formed at least of two heavy chains and a number of intermediate and light chains. Associated with axonemal dynein subunits such as, DNAH2, DNAI3, and DYNLT1.

The protein resides in the cytoplasm. It is found in the cytoskeleton. The protein localises to the flagellum axoneme. It localises to the cilium axoneme. Its subcellular location is the dynein axonemal particle. Functionally, plays a critical role in the assembly of axonemal dynein complex, thereby playing a role in ciliary motility. This is Dynein axonemal intermediate chain 4 from Xenopus laevis (African clawed frog).